Reading from the N-terminus, the 260-residue chain is Histidine-binding periplasmic protein (260 aa).

A signal peptide spans 1–22; it reads MKKLALSLSLVLAFSSATAAFA. Cys-60 and Cys-67 are oxidised to a cystine. Residues Ser-91, Ser-92, Ser-94, Arg-99, Thr-143, and Asp-183 each coordinate L-histidine.

The protein belongs to the bacterial solute-binding protein 3 family. In terms of assembly, the complex is composed of two ATP-binding proteins (HisP), two transmembrane proteins (HisM and HisQ) and a solute-binding protein (HisJ).

The protein resides in the periplasm. Functionally, part of the ABC transporter complex HisPMQJ involved in histidine transport. Binds histidine. Interacts with HisQMP and stimulates ATPase activity of HisP, which results in histidine translocation. May have some additional function(s) in translocation that is independent of the stimulation of ATP hydrolysis. The chain is Histidine-binding periplasmic protein from Salmonella typhimurium (strain LT2 / SGSC1412 / ATCC 700720).